A 100-amino-acid chain; its full sequence is UPF0213 protein YhbQ (100 aa).

The GIY-YIG domain occupies 2 to 77 (TPWFLYLIRT…KQLTKRQKER (76 aa)).

This sequence belongs to the UPF0213 family.

This is UPF0213 protein YhbQ from Escherichia fergusonii (strain ATCC 35469 / DSM 13698 / CCUG 18766 / IAM 14443 / JCM 21226 / LMG 7866 / NBRC 102419 / NCTC 12128 / CDC 0568-73).